We begin with the raw amino-acid sequence, 478 residues long: 3-isopropylmalate dehydratase large subunit (478 aa).

Positions 355, 415, and 418 each coordinate [4Fe-4S] cluster.

Belongs to the aconitase/IPM isomerase family. LeuC type 1 subfamily. Heterodimer of LeuC and LeuD. It depends on [4Fe-4S] cluster as a cofactor.

It catalyses the reaction (2R,3S)-3-isopropylmalate = (2S)-2-isopropylmalate. The protein operates within amino-acid biosynthesis; L-leucine biosynthesis; L-leucine from 3-methyl-2-oxobutanoate: step 2/4. Functionally, catalyzes the isomerization between 2-isopropylmalate and 3-isopropylmalate, via the formation of 2-isopropylmaleate. The polypeptide is 3-isopropylmalate dehydratase large subunit (Paracoccus denitrificans (strain Pd 1222)).